Consider the following 477-residue polypeptide: UDP-N-acetylmuramate--L-alanine ligase (477 aa).

112 to 118 is an ATP binding site; the sequence is GAHGKTT.

It belongs to the MurCDEF family.

The protein resides in the cytoplasm. The enzyme catalyses UDP-N-acetyl-alpha-D-muramate + L-alanine + ATP = UDP-N-acetyl-alpha-D-muramoyl-L-alanine + ADP + phosphate + H(+). The protein operates within cell wall biogenesis; peptidoglycan biosynthesis. Cell wall formation. This Acidovorax ebreus (strain TPSY) (Diaphorobacter sp. (strain TPSY)) protein is UDP-N-acetylmuramate--L-alanine ligase.